We begin with the raw amino-acid sequence, 1073 residues long: Probable lipase MIL1 (1073 aa).

Disordered regions lie at residues 1–151 (MSDS…AVSS) and 163–190 (LTSK…KSVN). Composition is skewed to basic and acidic residues over residues 54–81 (QAKE…EAGK) and 101–121 (GIDR…HDTD). Positions 143–147 (WQEMP) match the APM2-interacting WQEMP motif motif. 3 N-linked (GlcNAc...) asparagine glycosylation sites follow: Asn190, Asn229, and Asn236. The disordered stretch occupies residues 230–267 (SSQTSVNLTSSPSTTSLNNEKNNDDDDDDSYDEYEDDV). Positions 233–249 (TSVNLTSSPSTTSLNNE) are enriched in low complexity. The span at 252 to 267 (NDDDDDDSYDEYEDDV) shows a compositional bias: acidic residues. An N-linked (GlcNAc...) asparagine glycan is attached at Asn280. A helical transmembrane segment spans residues 292-312 (FAYVGAINILANQMCTNLATL). Residues 385 to 448 (NPWENDRDHE…SDVPGKVLDP (64 aa)) form a disordered region. Over residues 404–427 (RMSPNEQNGSVQASTPDPEQSATP) the composition is skewed to polar residues. N-linked (GlcNAc...) asparagine glycosylation occurs at Asn411. Ser435 is subject to Phosphoserine. A helical transmembrane segment spans residues 457-477 (LNIDVAWTIICDLFLICLQSS). The N-linked (GlcNAc...) asparagine glycan is linked to Asn495. 2 helical membrane passes run 553–573 (LVLG…IAAG) and 577–597 (IGIT…VVAV). N-linked (GlcNAc...) asparagine glycosylation is present at Asn726. The helical transmembrane segment at 818 to 838 (WFLAYLFRAAAGGFSAVMGIS) threads the bilayer. A glycan (N-linked (GlcNAc...) asparagine) is linked at Asn850. 2 disordered regions span residues 942–968 (GRDM…EGIA) and 1010–1073 (KEVE…PDDI). Residues 1027–1037 (PSTPKINPPQS) show a composition bias toward pro residues. A Phosphoserine modification is found at Ser1037.

This sequence belongs to the TMCO4 family. Interacts with RPP0. Interacts with APM2.

It localises to the golgi apparatus membrane. It is found in the early endosome membrane. The protein resides in the cytoplasmic vesicle. The protein localises to the clathrin-coated vesicle membrane. In terms of biological role, probable lipase that recruits the AP-1-related (AP-1R) complex to membranes via interaction with APM2. The AP-1R complex is an adapter protein complex that mediates of cargo protein SNC1 sorting in clathrin-coated vesicles. This chain is Probable lipase MIL1, found in Saccharomyces cerevisiae (strain ATCC 204508 / S288c) (Baker's yeast).